The sequence spans 209 residues: Uracil phosphoribosyltransferase (209 aa).

5-phospho-alpha-D-ribose 1-diphosphate-binding positions include Arg79, Arg104, and 131-139; that span reads DPMLATGGS. Uracil is bound by residues Ile194 and 199–201; that span reads GDA. Asp200 contacts 5-phospho-alpha-D-ribose 1-diphosphate.

The protein belongs to the UPRTase family. Mg(2+) serves as cofactor.

The enzyme catalyses UMP + diphosphate = 5-phospho-alpha-D-ribose 1-diphosphate + uracil. It participates in pyrimidine metabolism; UMP biosynthesis via salvage pathway; UMP from uracil: step 1/1. Allosterically activated by GTP. Functionally, catalyzes the conversion of uracil and 5-phospho-alpha-D-ribose 1-diphosphate (PRPP) to UMP and diphosphate. The protein is Uracil phosphoribosyltransferase of Macrococcus caseolyticus (strain JCSC5402) (Macrococcoides caseolyticum).